Reading from the N-terminus, the 280-residue chain is Meiotic driver wtf35 (280 aa).

Basic and acidic residues predominate over residues 1-29 (MKNKDYPLRTSMDELSTKNDNEIDLEKGP). Disordered stretches follow at residues 1 to 49 (MKNK…DLNN) and 64 to 100 (NKST…GTTD). The next 4 membrane-spanning stretches (helical) occupy residues 105-125 (FLIK…PAVC), 142-162 (WTLI…SWYF), 184-204 (IPMA…PRVA), and 218-238 (SLAD…VETV).

This sequence belongs to the WTF family. As to quaternary structure, homomer. Forms protein aggregates. The two isoforms can interact with each other and with themselves. High sequence similarity is required for their interaction.

It is found in the spore membrane. The protein localises to the vacuole membrane. It localises to the ascus epiplasm. Its subcellular location is the cytoplasm. The protein resides in the endoplasmic reticulum membrane. Functionally, promotes unequal transmission of alleles from the parental zygote to progeny spores by acting as poison/antidote system where the poison and antidote proteins are produced from the same locus; the poison component is trans-acting and targets all spores within an ascus whereas the antidote component is spore-specific, leading to poisoning of all progeny that do not inherit the allele. In terms of biological role, localizes isoform 2 to the vacuole thereby facilitating its degradation. Forms toxic aggregates that disrupt spore maturation. The polypeptide is Meiotic driver wtf35 (Schizosaccharomyces pombe (Fission yeast)).